The chain runs to 347 residues: UDP-3-O-acylglucosamine N-acyltransferase (347 aa).

Catalysis depends on histidine 245, which acts as the Proton acceptor.

It belongs to the transferase hexapeptide repeat family. LpxD subfamily. Homotrimer.

The enzyme catalyses a UDP-3-O-[(3R)-3-hydroxyacyl]-alpha-D-glucosamine + a (3R)-hydroxyacyl-[ACP] = a UDP-2-N,3-O-bis[(3R)-3-hydroxyacyl]-alpha-D-glucosamine + holo-[ACP] + H(+). It participates in bacterial outer membrane biogenesis; LPS lipid A biosynthesis. Catalyzes the N-acylation of UDP-3-O-acylglucosamine using 3-hydroxyacyl-ACP as the acyl donor. Is involved in the biosynthesis of lipid A, a phosphorylated glycolipid that anchors the lipopolysaccharide to the outer membrane of the cell. This Chromohalobacter salexigens (strain ATCC BAA-138 / DSM 3043 / CIP 106854 / NCIMB 13768 / 1H11) protein is UDP-3-O-acylglucosamine N-acyltransferase.